Consider the following 546-residue polypeptide: MAKIIAFDEEARRGLEKGLNTLADAVKVTLGPKGRNVVLEKSWGAPTITNDGVSIAREIELEDPYEKIGAELVKEVAKKTDDVAGDGTTTATVLAQALVREGLRNVAAGSNPMGIKRGIELATAKVTEALLASAKEVETEEQIAATAGISAADPAIGEQIAKAMYAVGGGKLNKESVITVEESNTFGVDLEVTEGMRFDKGYISGYFATDMERLEAVLEDPYILLVSGKISNIKELLPLLEKVMQTGKPLLIIAEDVEGEALSTLVVNKIRGTFKSVAVKAPGFGDRRKAQLQDMAILTGSQVISEEVGLSLETADLPLLGRARKVVVTKDDTTIVEGAGDSAQIDGRVNQIRTEIENSDSEYDREKLQERLAKLSGGVAVIKVGAATEVELTERKHRIEDAVRNAKAAVEEGIVAGGGVALLQAAHVLANDLDLTGDEATGVKIVREALSAPLKQIALNAGLEAGVVADKVSHLPAGEGLNAATGEYVDLMAAGINDPVKVTRSALQNAASIAALFLTTEAVVADKPEPAAPAMPGADEMGGMGF.

Residues 29-32 (TLGP), 86-90 (DGTTT), glycine 418, 482-484 (NAA), and aspartate 498 each bind ATP.

It belongs to the chaperonin (HSP60) family. In terms of assembly, forms a cylinder of 14 subunits composed of two heptameric rings stacked back-to-back. Interacts with the co-chaperonin GroES.

The protein resides in the cytoplasm. The enzyme catalyses ATP + H2O + a folded polypeptide = ADP + phosphate + an unfolded polypeptide.. In terms of biological role, together with its co-chaperonin GroES, plays an essential role in assisting protein folding. The GroEL-GroES system forms a nano-cage that allows encapsulation of the non-native substrate proteins and provides a physical environment optimized to promote and accelerate protein folding. This is Chaperonin GroEL 2 from Corynebacterium diphtheriae (strain ATCC 700971 / NCTC 13129 / Biotype gravis).